Here is a 249-residue protein sequence, read N- to C-terminus: Small ribosomal subunit protein uS2 (249 aa).

This sequence belongs to the universal ribosomal protein uS2 family.

This chain is Small ribosomal subunit protein uS2, found in Polynucleobacter asymbioticus (strain DSM 18221 / CIP 109841 / QLW-P1DMWA-1) (Polynucleobacter necessarius subsp. asymbioticus).